The following is a 336-amino-acid chain: Dihydrolipoyl dehydrogenase (336 aa).

FAD is bound by residues Glu-34 to Cys-42, Lys-51, and Gly-115. A disulfide bridge links Cys-42 with Cys-47. NAD(+) contacts are provided by residues Gly-180–Ile-184, Glu-203, Val-237, and Ser-264–Thr-267. 2 residues coordinate FAD: Asp-304 and Ala-312.

This sequence belongs to the class-I pyridine nucleotide-disulfide oxidoreductase family. Homodimer. FAD serves as cofactor.

It is found in the cytoplasm. It catalyses the reaction N(6)-[(R)-dihydrolipoyl]-L-lysyl-[protein] + NAD(+) = N(6)-[(R)-lipoyl]-L-lysyl-[protein] + NADH + H(+). Lipoamide dehydrogenase is a component of the alpha-ketoacid dehydrogenase complexes. The chain is Dihydrolipoyl dehydrogenase (pdhD) from Acholeplasma laidlawii.